An 88-amino-acid polypeptide reads, in one-letter code: Small ribosomal subunit protein uS17 (88 aa).

Belongs to the universal ribosomal protein uS17 family. Part of the 30S ribosomal subunit.

In terms of biological role, one of the primary rRNA binding proteins, it binds specifically to the 5'-end of 16S ribosomal RNA. The protein is Small ribosomal subunit protein uS17 of Levilactobacillus brevis (strain ATCC 367 / BCRC 12310 / CIP 105137 / JCM 1170 / LMG 11437 / NCIMB 947 / NCTC 947) (Lactobacillus brevis).